The chain runs to 183 residues: MDIDTYKEFGASVELLSFLPSDFFPSIRDLLDTAFALHREALESPEHCSPHHTALRQAIVCWGELMNLATWVGSNLEDPASRELVVSYVNVNMGLKIRQLLWFHISCLTFGRETVLEYLVSVGVWIRTPQAYRPPNAPILSTLPETTVVRRRGRSPRRRTPSPRRRRSKSPRRRRSQSRESQC.

The interval 143 to 183 (LPETTVVRRRGRSPRRRTPSPRRRRSKSPRRRRSQSRESQC) is disordered. Positions 149 to 176 (VRRRGRSPRRRTPSPRRRRSKSPRRRRS) are enriched in basic residues. Phosphoserine; by host is present on residues Ser155, Ser162, and Ser170. One copy of the 1; half-length repeat lies at 155–160 (SPRRRT). Positions 155 to 176 (SPRRRTPSPRRRRSKSPRRRRS) are 3 X 7 AA repeats of S-P-R-R-R-[PR]-S. A Bipartite nuclear localization signal motif is present at residues 158 to 175 (RRTPSPRRRRSKSPRRRR). Tandem repeats lie at residues 162-168 (SPRRRRS) and 170-176 (SPRRRRS). The interval 177–183 (QSRESQC) is RNA binding.

Belongs to the orthohepadnavirus core antigen family. As to quaternary structure, homodimerizes, then multimerizes. Interacts with cytosol exposed regions of viral L glycoprotein present in the reticulum-to-Golgi compartment. Interacts with human FLNB. Phosphorylated form interacts with host importin alpha; this interaction depends on the exposure of the NLS, which itself depends upon genome maturation and/or phosphorylation of the capsid protein. Interacts with host NUP153. In terms of processing, phosphorylated by host SRPK1, SRPK2, and maybe protein kinase C or GAPDH. Phosphorylation is critical for pregenomic RNA packaging. Protein kinase C phosphorylation is stimulated by HBx protein and may play a role in transport of the viral genome to the nucleus at the late step during the viral replication cycle.

It is found in the virion. The protein resides in the host cytoplasm. Self assembles to form an icosahedral capsid. Most capsids appear to be large particles with an icosahedral symmetry of T=4 and consist of 240 copies of capsid protein, though a fraction forms smaller T=3 particles consisting of 180 capsid proteins. Entering capsids are transported along microtubules to the nucleus. Phosphorylation of the capsid is thought to induce exposure of nuclear localization signal in the C-terminal portion of the capsid protein that allows binding to the nuclear pore complex via the importin (karyopherin-) alpha and beta. Capsids are imported in intact form through the nuclear pore into the nuclear basket, where it probably binds NUP153. Only capsids that contain the mature viral genome can release the viral DNA and capsid protein into the nucleoplasm. Immature capsids get stuck in the basket. Capsids encapsulate the pre-genomic RNA and the P protein. Pre-genomic RNA is reverse-transcribed into DNA while the capsid is still in the cytoplasm. The capsid can then either be directed to the nucleus, providing more genomes for transcription, or bud through the endoplasmic reticulum to provide new virions. The sequence is that of Capsid protein from Homo sapiens (Human).